Here is a 3365-residue protein sequence, read N- to C-terminus: Probable serine/threonine-protein kinase roco9 (3365 aa).

Disordered regions lie at residues 1 to 177 (MTSI…KSSK), 397 to 497 (ESTE…QPPQ), 944 to 985 (PIKK…GFLS), 1044 to 1098 (IHQQ…NNKI), and 1261 to 1301 (QNNL…ISKG). Positions 8–27 (FDKKSKRSNEDTGEKEETKK) are enriched in basic and acidic residues. 4 stretches are compositionally biased toward low complexity: residues 51–84 (LQQL…SLNT), 100–116 (STNS…STRS), 137–169 (SQTS…TVKT), and 397–415 (ESTE…TLEP). In terms of domain architecture, Rho-GAP spans 243–437 (TPLYSLIKRQ…RLPQQSSDDN (195 aa)). The segment covering 421–434 (PLSTSTQRLPQQSS) has biased composition (polar residues). 5 stretches are compositionally biased toward low complexity: residues 435 to 445 (DDNSNNDNNNK), 457 to 489 (NNDN…QPKQ), 959 to 974 (SSPL…IPSK), 1044 to 1096 (IHQQ…NNNN), and 1262 to 1301 (NNLN…ISKG). The Myotubularin phosphatase domain maps to 804–1484 (IWDIYSPLIE…DQIILWSSFF (681 aa)). LRR repeat units follow at residues 1510-1526 (SQKL…LSYF), 1527-1549 (STLT…IILL), 1550-1572 (SNLT…LLKL), 1576-1599 (KLKL…IYTL), 1600-1622 (STLT…ISKM), 1624-1645 (QLKC…LSLC), 1646-1668 (VGLE…FFKL), 1670-1691 (SLRM…KLDD), 1697-1720 (MNEI…MFEM), 1722-1743 (SLIH…LLDN), 1744-1770 (LVNL…LFKL), 1772-1789 (VLDL…HAML), 1790-1812 (PSLK…DFNL), 1814-1835 (LLSE…IGTK), 1837-1861 (LSLT…ALLK), and 1863-1887 (LKSL…DAIL). Residues 1932-1947 (SKEREKEKEKEKEKEK) are compositionally biased toward basic and acidic residues. 4 disordered regions span residues 1932 to 1963 (SKER…DKDK), 2190 to 2389 (NNNN…NNGS), 2507 to 2567 (APST…LQTP), and 2674 to 2704 (SNQQ…TSIN). Low complexity-rich tracts occupy residues 2190 to 2205 (NNNN…NNNN), 2216 to 2389 (SINN…NNGS), 2522 to 2567 (NNTS…LQTP), and 2676 to 2688 (QQQQ…STQH). Residues 3008–3269 (ELDPNPIGEG…KKLEEIELIL (262 aa)) enclose the Protein kinase domain. ATP-binding positions include 3014–3022 (IGEGGTATV) and lysine 3035. The active-site Proton acceptor is the aspartate 3132. Residues 3311-3333 (QQQKQQQLQQQKQSPKQLQQQKP) show a composition bias toward low complexity. The disordered stretch occupies residues 3311–3365 (QQQKQQQLQQQKQSPKQLQQQKPLPTPPKQLSNNDSTPTKPLDDSSDSSSEDSNN). Positions 3354-3365 (DSSDSSSEDSNN) are enriched in acidic residues.

It belongs to the protein kinase superfamily. TKL Ser/Thr protein kinase family. ROCO subfamily.

It catalyses the reaction L-seryl-[protein] + ATP = O-phospho-L-seryl-[protein] + ADP + H(+). The catalysed reaction is L-threonyl-[protein] + ATP = O-phospho-L-threonyl-[protein] + ADP + H(+). The polypeptide is Probable serine/threonine-protein kinase roco9 (roco9) (Dictyostelium discoideum (Social amoeba)).